A 379-amino-acid chain; its full sequence is MEITDIGGVLCNGIKEGKYGLGLVRVRGSIAGVFTQNKIRAAPVIVCEENIRDGVVEGVIVNSGNANAYTGEQGMRDAREMCRIAANLLGCEERRVAVASTGVIGRKLDMEWIRKKAPEVYSGLGNSVENAERFGRAIVTTDRFVKKAYSEKARIAAVAKGAGMIAPNMATMLCFAFTSAKFDSGELYDMLRRAADKTFNRLTVDGDTSTNDTVLLISTGKERVERDVFEEELCSVFYSIAKQMARDGEGATKVFEVRVDGARNDEDANLIARAVASSLLVKTAIFGCDPNWGRIIAAAGYSGADVDERITLSLSDGRDEVFLIDSGRPLGNEERARVLMEKAEELVIRLRLEKGNGKGFAIGCDLTYDYVKLNAEYTT.

Residues Thr-140, Lys-160, Thr-171, Glu-249, Asn-374, and Thr-379 each contribute to the substrate site. Residue Thr-171 is the Nucleophile of the active site.

Belongs to the ArgJ family. In terms of assembly, heterotetramer of two alpha and two beta chains.

It localises to the cytoplasm. The enzyme catalyses N(2)-acetyl-L-ornithine + L-glutamate = N-acetyl-L-glutamate + L-ornithine. It carries out the reaction L-glutamate + acetyl-CoA = N-acetyl-L-glutamate + CoA + H(+). It participates in amino-acid biosynthesis; L-arginine biosynthesis; L-ornithine and N-acetyl-L-glutamate from L-glutamate and N(2)-acetyl-L-ornithine (cyclic): step 1/1. Its pathway is amino-acid biosynthesis; L-arginine biosynthesis; N(2)-acetyl-L-ornithine from L-glutamate: step 1/4. In terms of biological role, catalyzes two activities which are involved in the cyclic version of arginine biosynthesis: the synthesis of N-acetylglutamate from glutamate and acetyl-CoA as the acetyl donor, and of ornithine by transacetylation between N(2)-acetylornithine and glutamate. The sequence is that of Arginine biosynthesis bifunctional protein ArgJ from Archaeoglobus fulgidus (strain ATCC 49558 / DSM 4304 / JCM 9628 / NBRC 100126 / VC-16).